Reading from the N-terminus, the 128-residue chain is Fluoride-specific ion channel FluC (128 aa).

A run of 4 helical transmembrane segments spans residues 7–27 (LAIG…AGLV), 37–57 (FGTL…IGAI), 73–93 (TGMM…FFLF), and 96–116 (ALYI…IILA). 2 residues coordinate Na(+): G77 and T80.

The protein belongs to the fluoride channel Fluc/FEX (TC 1.A.43) family.

It is found in the cell inner membrane. It carries out the reaction fluoride(in) = fluoride(out). With respect to regulation, na(+) is not transported, but it plays an essential structural role and its presence is essential for fluoride channel function. Functionally, fluoride-specific ion channel. Important for reducing fluoride concentration in the cell, thus reducing its toxicity. This Nautilia profundicola (strain ATCC BAA-1463 / DSM 18972 / AmH) protein is Fluoride-specific ion channel FluC.